Consider the following 148-residue polypeptide: Cytochrome c oxidase subunit 4, mitochondrial (148 aa).

A mitochondrion-targeting transit peptide spans 1–24; that stretch reads MFALRSIRSATKAFQTTSIVSQRG.

Slime mold cytochrome c oxidase consists of at least seven different polypeptides species, subunits I, II, III, IV, V, VI, and VIIe/s in order of MW.

It is found in the mitochondrion inner membrane. It carries out the reaction 4 Fe(II)-[cytochrome c] + O2 + 8 H(+)(in) = 4 Fe(III)-[cytochrome c] + 2 H2O + 4 H(+)(out). This protein is one of the nuclear-coded polypeptide chains of cytochrome c oxidase, the terminal oxidase in mitochondrial electron transport. The protein is Cytochrome c oxidase subunit 4, mitochondrial (cxdA) of Dictyostelium discoideum (Social amoeba).